Reading from the N-terminus, the 428-residue chain is Serine--tRNA ligase (428 aa).

Residue 235–237 (TAE) coordinates L-serine. 266–268 (RSE) contacts ATP. Glu-289 serves as a coordination point for L-serine. 353-356 (EISS) contacts ATP. Ser-389 is a binding site for L-serine.

This sequence belongs to the class-II aminoacyl-tRNA synthetase family. Type-1 seryl-tRNA synthetase subfamily. As to quaternary structure, homodimer. The tRNA molecule binds across the dimer.

The protein localises to the cytoplasm. The catalysed reaction is tRNA(Ser) + L-serine + ATP = L-seryl-tRNA(Ser) + AMP + diphosphate + H(+). It catalyses the reaction tRNA(Sec) + L-serine + ATP = L-seryl-tRNA(Sec) + AMP + diphosphate + H(+). It participates in aminoacyl-tRNA biosynthesis; selenocysteinyl-tRNA(Sec) biosynthesis; L-seryl-tRNA(Sec) from L-serine and tRNA(Sec): step 1/1. Its function is as follows. Catalyzes the attachment of serine to tRNA(Ser). Is also able to aminoacylate tRNA(Sec) with serine, to form the misacylated tRNA L-seryl-tRNA(Sec), which will be further converted into selenocysteinyl-tRNA(Sec). The sequence is that of Serine--tRNA ligase from Shewanella frigidimarina (strain NCIMB 400).